Consider the following 354-residue polypeptide: Uroporphyrinogen decarboxylase (354 aa).

Substrate contacts are provided by residues 27-31, aspartate 77, tyrosine 154, threonine 209, and histidine 327; that span reads RQAGR.

The protein belongs to the uroporphyrinogen decarboxylase family. Homodimer.

The protein resides in the cytoplasm. It carries out the reaction uroporphyrinogen III + 4 H(+) = coproporphyrinogen III + 4 CO2. Its pathway is porphyrin-containing compound metabolism; protoporphyrin-IX biosynthesis; coproporphyrinogen-III from 5-aminolevulinate: step 4/4. Its function is as follows. Catalyzes the decarboxylation of four acetate groups of uroporphyrinogen-III to yield coproporphyrinogen-III. The protein is Uroporphyrinogen decarboxylase of Klebsiella pneumoniae (strain 342).